Consider the following 302-residue polypeptide: Homoserine O-acetyltransferase (302 aa).

Cysteine 142 functions as the Acyl-thioester intermediate in the catalytic mechanism. Substrate is bound by residues lysine 163 and serine 192. Catalysis depends on histidine 235, which acts as the Proton acceptor. Glutamate 237 is a catalytic residue. Arginine 249 is a binding site for substrate.

The protein belongs to the MetA family.

The protein localises to the cytoplasm. It carries out the reaction L-homoserine + acetyl-CoA = O-acetyl-L-homoserine + CoA. The protein operates within amino-acid biosynthesis; L-methionine biosynthesis via de novo pathway; O-acetyl-L-homoserine from L-homoserine: step 1/1. In terms of biological role, transfers an acetyl group from acetyl-CoA to L-homoserine, forming acetyl-L-homoserine. The polypeptide is Homoserine O-acetyltransferase (Geobacillus kaustophilus).